Consider the following 320-residue polypeptide: Putative S-adenosyl-L-methionine-dependent methyltransferase MAP_4078 (320 aa).

Residues D132 and 161-162 each bind S-adenosyl-L-methionine; that span reads DL. Residues 294–320 are disordered; that stretch reads PPHDIEDAIPQTRFVAAQRTERTRPDR.

The protein belongs to the UPF0677 family.

Exhibits S-adenosyl-L-methionine-dependent methyltransferase activity. The chain is Putative S-adenosyl-L-methionine-dependent methyltransferase MAP_4078 from Mycolicibacterium paratuberculosis (strain ATCC BAA-968 / K-10) (Mycobacterium paratuberculosis).